Consider the following 858-residue polypeptide: GDP-fucose protein O-fucosyltransferase 2 (858 aa).

Topologically, residues Met1 to Arg150 are cytoplasmic. The chain crosses the membrane as a helical; Signal-anchor for type II membrane protein span at residues Leu151–Ala171. Topologically, residues Thr172–Leu858 are lumenal. Gly237 to His241 provides a ligand contact to GDP-beta-L-fucose. The active-site Proton acceptor is the Glu238. The tract at residues Ala448 to Glu510 is disordered. Basic and acidic residues predominate over residues Asp486–Glu510. GDP-beta-L-fucose contacts are provided by residues His646 to Arg648 and Arg787 to Phe788. A disordered region spans residues Thr819 to Leu858. Over residues Lys831–Arg846 the composition is skewed to basic and acidic residues.

The protein belongs to the glycosyltransferase 68 family.

It localises to the endoplasmic reticulum membrane. It catalyses the reaction L-seryl-[protein] + GDP-beta-L-fucose = 3-O-(alpha-L-fucosyl)-L-seryl-[protein] + GDP + H(+). The catalysed reaction is L-threonyl-[protein] + GDP-beta-L-fucose = 3-O-(alpha-L-fucosyl)-L-threonyl-[protein] + GDP + H(+). It functions in the pathway protein modification; protein glycosylation. In terms of biological role, catalyzes the reaction that attaches fucose through an O-glycosidic linkage to a conserved serine or threonine residue in the consensus sequence C1-X-X-S/T-C2 of thrombospondin type I repeats (TSRs) where C1 and C2 are the first and second cysteines of the repeat, respectively. O-fucosylates microneme protein MIC2 and may play a role in its stabilization. Probably by regulating protein O-fucosylation, may play a role in tachyzoite adhesion to and/or invasion of host cells; however, POFUT2 involvement in adhesion/invasion is controversial. The protein is GDP-fucose protein O-fucosyltransferase 2 of Toxoplasma gondii (strain ATCC 50853 / GT1).